Reading from the N-terminus, the 669-residue chain is DNA ligase (669 aa).

NAD(+) is bound by residues 33–37, 82–83, and glutamate 114; these read DAEYD and SL. The active-site N6-AMP-lysine intermediate is lysine 116. NAD(+)-binding residues include arginine 137, glutamate 174, lysine 291, and lysine 315. Zn(2+)-binding residues include cysteine 409, cysteine 412, cysteine 427, and cysteine 433. The BRCT domain occupies 593–669; that stretch reads EIPQPLAGKV…QTEQDLLALL (77 aa).

The protein belongs to the NAD-dependent DNA ligase family. LigA subfamily. The cofactor is Mg(2+). It depends on Mn(2+) as a cofactor.

The catalysed reaction is NAD(+) + (deoxyribonucleotide)n-3'-hydroxyl + 5'-phospho-(deoxyribonucleotide)m = (deoxyribonucleotide)n+m + AMP + beta-nicotinamide D-nucleotide.. Functionally, DNA ligase that catalyzes the formation of phosphodiester linkages between 5'-phosphoryl and 3'-hydroxyl groups in double-stranded DNA using NAD as a coenzyme and as the energy source for the reaction. It is essential for DNA replication and repair of damaged DNA. The polypeptide is DNA ligase (Vibrio vulnificus (strain CMCP6)).